Reading from the N-terminus, the 623-residue chain is Chaperone protein DnaK (623 aa).

The residue at position 197 (Thr197) is a Phosphothreonine; by autocatalysis. The disordered stretch occupies residues 600–623; that stretch reads KKDENAGANGGNKKDDDVIDAEVE.

It belongs to the heat shock protein 70 family.

Functionally, acts as a chaperone. The chain is Chaperone protein DnaK from Campylobacter concisus (strain 13826).